Here is a 285-residue protein sequence, read N- to C-terminus: 2,3,4,5-tetrahydropyridine-2,6-dicarboxylate N-succinyltransferase (285 aa).

Positions 111 and 148 each coordinate substrate.

Belongs to the transferase hexapeptide repeat family. In terms of assembly, homotrimer.

The protein localises to the cytoplasm. It catalyses the reaction (S)-2,3,4,5-tetrahydrodipicolinate + succinyl-CoA + H2O = (S)-2-succinylamino-6-oxoheptanedioate + CoA. It participates in amino-acid biosynthesis; L-lysine biosynthesis via DAP pathway; LL-2,6-diaminopimelate from (S)-tetrahydrodipicolinate (succinylase route): step 1/3. This chain is 2,3,4,5-tetrahydropyridine-2,6-dicarboxylate N-succinyltransferase, found in Rhizobium rhizogenes (strain K84 / ATCC BAA-868) (Agrobacterium radiobacter).